The sequence spans 203 residues: Transcriptional regulator GfcR (203 aa).

The protein belongs to the purine/pyrimidine phosphoribosyltransferase family. GfcR subfamily.

The sequence is that of Transcriptional regulator GfcR from Methanothrix thermoacetophila (strain DSM 6194 / JCM 14653 / NBRC 101360 / PT) (Methanosaeta thermophila).